A 310-amino-acid chain; its full sequence is Altered inheritance of mitochondria protein 46, mitochondrial (310 aa).

Residues 1–20 constitute a mitochondrion transit peptide; that stretch reads MRLISKVLVKTNCLEVGMRR.

Belongs to the AIM18/AIM46 family.

The protein resides in the mitochondrion. The sequence is that of Altered inheritance of mitochondria protein 46, mitochondrial (AIM46) from Saccharomyces cerevisiae (strain YJM789) (Baker's yeast).